We begin with the raw amino-acid sequence, 46 residues long: Crambin (46 aa).

3 disulfide bridges follow: Cys3/Cys40, Cys4/Cys32, and Cys16/Cys26.

It belongs to the plant thionin (TC 1.C.44) family.

It is found in the secreted. Functionally, the function of this hydrophobic plant seed protein is not known. The polypeptide is Crambin (THI2) (Crambe hispanica subsp. abyssinica (Abyssinian kale)).